The primary structure comprises 354 residues: Guanine nucleotide-binding protein G(t) subunit alpha-2 (354 aa).

The tract at residues 1–28 (MGSGISAEDKELARRSKELEKKLQEDAD) is disordered. Gly-2 is lipidated: N-myristoyl glycine. A compositionally biased stretch (basic and acidic residues) spans 7–28 (AEDKELARRSKELEKKLQEDAD). The G-alpha domain occupies 32–354 (KTVKLLLLGA…KENLKDCGLF (323 aa)). The G1 motif stretch occupies residues 35–48 (KLLLLGAGESGKST). GTP-binding positions include 40–47 (GAGESGKS), 175–181 (LRSRVKT), 200–204 (DVGGQ), 269–272 (NKKD), and Ala-326. 2 residues coordinate Mg(2+): Ser-47 and Thr-181. The G2 motif stretch occupies residues 173 to 181 (DVLRSRVKT). The G3 motif stretch occupies residues 196–205 (FRMFDVGGQR). The segment at 265–272 (VLFLNKKD) is G4 motif. A G5 motif region spans residues 324-329 (TCATDT).

It belongs to the G-alpha family. G(i/o/t/z) subfamily. G proteins are composed of 3 units; alpha, beta and gamma. The alpha chain contains the guanine nucleotide binding site. In the retina, expressed in the rod photoreceptors.

It is found in the cell projection. The protein localises to the cilium. It localises to the photoreceptor outer segment. The protein resides in the photoreceptor inner segment. Its function is as follows. Guanine nucleotide-binding proteins (G proteins) are involved as modulators or transducers in various transmembrane signaling systems. Transducin is an amplifier and one of the transducers of a visual impulse that performs the coupling between rhodopsin and cGMP-phosphodiesterase. In Mus musculus (Mouse), this protein is Guanine nucleotide-binding protein G(t) subunit alpha-2 (Gnat2).